The chain runs to 505 residues: MKLAYWMYAGPAHIGTLRIATSFKNVHAIMHAPLGDDYFNVMRSMLERERDFTPVTASVVDRKVLGRGSQDKVVTNIVRKDQEEAPDLIVLTPTCTSSILQEDLQNFVARAQEQSKADVLLADVNHYRYNEFTAADRTLTQIVSYYIEKLAGNLPARSEKPTANILGISTLGFHNHHDCRELKQLLADLGVEVNVVAPEGCSVHDIQKMPSAWFNVVPYRELGRGAAEYLQRQTGQPLIDITPMGILQTARFIRAVQQILNTQGARVEYEEYIRSQTLFVSQAAWFSRSIDCQNLQGKRAVVYGDLTHAAAMTRILAREMGVRVVWAGTFCKYDAEWFKAEVADLCDEVLISDDHAEVGDRIAAAEPAAIFGTQMERHIGKRLNIPCGVISSPIHIQNFPVGYRPFLGYEGTNQIADLVYNSFTLGMEDHLLEVFGGHDTKEVITKTMTAQSDLEWDEAATRELAKIPGFVRSKVKRNTEKFARESGRDKITLEVMYAAKEAAGA.

Asp-36 lines the [4Fe-4S] cluster pocket. Asp-291 functions as the Proton donor in the catalytic mechanism. 426–427 (GM) provides a ligand contact to substrate.

It belongs to the ChlB/BchB/BchZ family. As to quaternary structure, protochlorophyllide reductase is composed of three subunits; ChlL, ChlN and ChlB. Forms a heterotetramer of two ChlB and two ChlN subunits. Requires [4Fe-4S] cluster as cofactor.

It catalyses the reaction chlorophyllide a + oxidized 2[4Fe-4S]-[ferredoxin] + 2 ADP + 2 phosphate = protochlorophyllide a + reduced 2[4Fe-4S]-[ferredoxin] + 2 ATP + 2 H2O. It functions in the pathway porphyrin-containing compound metabolism; chlorophyll biosynthesis (light-independent). In terms of biological role, component of the dark-operative protochlorophyllide reductase (DPOR) that uses Mg-ATP and reduced ferredoxin to reduce ring D of protochlorophyllide (Pchlide) to form chlorophyllide a (Chlide). This reaction is light-independent. The NB-protein (ChlN-ChlB) is the catalytic component of the complex. The protein is Light-independent protochlorophyllide reductase subunit B of Gloeobacter violaceus (strain ATCC 29082 / PCC 7421).